Consider the following 201-residue polypeptide: Imidazoleglycerol-phosphate dehydratase (201 aa).

It belongs to the imidazoleglycerol-phosphate dehydratase family.

The protein localises to the cytoplasm. It carries out the reaction D-erythro-1-(imidazol-4-yl)glycerol 3-phosphate = 3-(imidazol-4-yl)-2-oxopropyl phosphate + H2O. Its pathway is amino-acid biosynthesis; L-histidine biosynthesis; L-histidine from 5-phospho-alpha-D-ribose 1-diphosphate: step 6/9. This Synechococcus sp. (strain CC9311) protein is Imidazoleglycerol-phosphate dehydratase.